Reading from the N-terminus, the 112-residue chain is uncharacterized protein (112 aa).

Its subcellular location is the plastid. It localises to the chloroplast. This is an uncharacterized protein from Chlamydomonas reinhardtii (Chlamydomonas smithii).